Reading from the N-terminus, the 904-residue chain is Dynamin-like protein C (904 aa).

A coiled-coil region spans residues 44-102 (IAEAMALKMHEEEKKKREEKKRKRDNEELLSKQVRTKLENERKKLDDSESINASTNQEL). Residues 53–93 (HEEEKKKREEKKRKRDNEELLSKQVRTKLENERKKLDDSES) form a disordered region. Basic and acidic residues predominate over residues 67 to 90 (RDNEELLSKQVRTKLENERKKLDD). The Dynamin-type G domain maps to 119 to 441 (SFDTPELVVV…HEKYQQNLLP (323 aa)). The tract at residues 129–136 (GMQSDGKS) is G1 motif. GTP is bound at residue 129-136 (GMQSDGKS). The interval 155–157 (GTR) is G2 motif. A disordered region spans residues 169–227 (SKQQPSCRFKKEDYSNSYGGSSSSTSTTSGNSNHNTDKQQNVSSSQGGGGGSNNLNEDK). Low complexity predominate over residues 183-213 (SNSYGGSSSSTSTTSGNSNHNTDKQQNVSSS). Residues 278–281 (DTPG) form a G3 motif region. GTP-binding positions include 278–282 (DTPGF) and 343–346 (TKFD). The segment at 343–346 (TKFD) is G4 motif. Residues 378 to 381 (LPLK) form a G5 motif region. Residues 781-811 (EMFQLGLKELENKLHKLEFQLIDCKKNRDKF) adopt a coiled-coil conformation. Disordered regions lie at residues 821–840 (SLNQ…ASSS) and 853–904 (NGKF…FDQN). Over residues 853 to 876 (NGKFSTPDKNSLTMSPFTSPFTQS) the composition is skewed to polar residues. Residues 877 to 891 (NYHQHNNNNYQINQQ) are compositionally biased toward low complexity.

Belongs to the TRAFAC class dynamin-like GTPase superfamily. Dynamin/Fzo/YdjA family.

It is found in the cytoplasm. It carries out the reaction GTP + H2O = GDP + phosphate + H(+). In terms of biological role, involved in cytokinesis. May hydrolyze GTP. In Dictyostelium discoideum (Social amoeba), this protein is Dynamin-like protein C (dlpC).